Here is a 141-residue protein sequence, read N- to C-terminus: uncharacterized protein (141 aa).

This is an uncharacterized protein from Borreliella burgdorferi (strain ATCC 35210 / DSM 4680 / CIP 102532 / B31) (Borrelia burgdorferi).